Consider the following 300-residue polypeptide: N-carbamoylputrescine amidase (300 aa).

Residues 8–266 enclose the CN hydrolase domain; that stretch reads VTVAALQFAC…EAVLVAQFDL (259 aa). The active-site Proton acceptor is E47. Residue K120 is the Proton donor of the active site. C157 serves as the catalytic Nucleophile.

It belongs to the carbon-nitrogen hydrolase superfamily. In terms of assembly, homooctamer.

The enzyme catalyses N-carbamoylputrescine + H2O + 2 H(+) = putrescine + NH4(+) + CO2. It participates in amine and polyamine biosynthesis; putrescine biosynthesis via agmatine pathway; putrescine from N-carbamoylputrescine (amidase route): step 1/1. Functionally, involved in polyamine biosynthesis. The polypeptide is N-carbamoylputrescine amidase (CPA) (Solanum lycopersicum (Tomato)).